Reading from the N-terminus, the 156-residue chain is Ribosome-binding factor A (156 aa).

The tract at residues A129 to R156 is disordered.

This sequence belongs to the RbfA family. As to quaternary structure, monomer. Binds 30S ribosomal subunits, but not 50S ribosomal subunits or 70S ribosomes.

It is found in the cytoplasm. Its function is as follows. One of several proteins that assist in the late maturation steps of the functional core of the 30S ribosomal subunit. Associates with free 30S ribosomal subunits (but not with 30S subunits that are part of 70S ribosomes or polysomes). Required for efficient processing of 16S rRNA. May interact with the 5'-terminal helix region of 16S rRNA. The protein is Ribosome-binding factor A of Salinispora arenicola (strain CNS-205).